The following is a 356-amino-acid chain: MNILHSTLSTWRDRLAPVSRTSTFRNTGQITPEEFVLAGDYLVYKFPSWSWADASNPAKRVSYLPPGKQFLVTRGVPCHRRLNDNFAGDAGHDDELVRDMLSGGTGGVDDDGWLRTGGGQDSADRQENRIKDVRTVDESGNMGEREEEEDEIPDMEDEDDDEEAIIRDPASGTTQPTRTYNLYITYSNFYRTPRLYMSGYLSPSEPLPPHLMMEDVVGDYKDKTVTLEDFPWYDGNVKMASVHPCRHASVMKTLLDRADAALKLRREKLKQAQSDPSKAPSVGESGLEGLVDDIKALSLSDQQQHGSDKSGGDEWEVLQHDEEEQVAIRVDQYLVVFLKFIASVTPGIEHDFTMGV.

Positions 85–174 (NFAGDAGHDD…IIRDPASGTT (90 aa)) are flexible region. Residues 108 to 160 (VDDDGWLRTGGGQDSADRQENRIKDVRTVDESGNMGEREEEEDEIPDMEDEDD) are disordered. The segment covering 122–137 (SADRQENRIKDVRTVD) has biased composition (basic and acidic residues). The segment covering 145 to 160 (REEEEDEIPDMEDEDD) has biased composition (acidic residues). The active-site Glycyl thioester intermediate is C245. Residues 249–332 (SVMKTLLDRA…EEQVAIRVDQ (84 aa)) form a handle region region.

The protein belongs to the ATG3 family. As to quaternary structure, monomer. Interacts with atg8 through an intermediate thioester bond through the C-terminal Gly of atg8. Also interacts with the 40 amino acid C-terminal region of the E1-like atg7 enzyme. Also interacts with the atg12-atg5 conjugate.

Its subcellular location is the cytoplasm. Its function is as follows. E2 conjugating enzyme required for the cytoplasm to vacuole transport (Cvt) and autophagy. Required for selective autophagic degradation of the nucleus (nucleophagy) as well as for mitophagy which contributes to regulate mitochondrial quantity and quality by eliminating the mitochondria to a basal level to fulfill cellular energy requirements and preventing excess ROS production. Responsible for the E2-like covalent binding of phosphatidylethanolamine to the C-terminal Gly of atg8. The atg12-atg5 conjugate plays a role of an E3 and promotes the transfer of atg8 from atg3 to phosphatidylethanolamine (PE). This step is required for the membrane association of atg8. The formation of the atg8-phosphatidylethanolamine conjugate is essential for autophagy and for the cytoplasm to vacuole transport (Cvt). The atg8-PE conjugate mediates tethering between adjacent membranes and stimulates membrane hemifusion, leading to expansion of the autophagosomal membrane during autophagy. The sequence is that of Autophagy-related protein 3 (atg3) from Aspergillus oryzae (strain ATCC 42149 / RIB 40) (Yellow koji mold).